A 510-amino-acid polypeptide reads, in one-letter code: Alpha-L-arabinofuranosidase B (510 aa).

Residues 1–24 (MTMSRSSRSSVLALALATGSLVAA) form the signal peptide. Positions 25–342 (GPCDIYSSGG…ADIVAAKYAT (318 aa)) are catalytic. Intrachain disulfides connect cysteine 27–cysteine 37, cysteine 87–cysteine 92, and cysteine 182–cysteine 183. Asparagine 89 carries N-linked (GlcNAc...) asparagine glycosylation. Aspartate 225 is a substrate binding site. The active-site Nucleophile is glutamate 227. Residues asparagine 228 and glycine 303 each contribute to the substrate site. The active-site Proton donor is the aspartate 304. The ABD stretch occupies residues 343-510 (TSLISGPALT…VSWVVADGFA (168 aa)). An intrachain disulfide couples cysteine 412 to cysteine 450. The substrate site is built by histidine 427, asparagine 429, phenylalanine 430, aspartate 446, histidine 475, glutamate 477, leucine 480, and aspartate 500.

The protein belongs to the glycosyl hydrolase 54 family.

It is found in the secreted. The enzyme catalyses Hydrolysis of terminal non-reducing alpha-L-arabinofuranoside residues in alpha-L-arabinosides.. Its pathway is glycan metabolism; L-arabinan degradation. In terms of biological role, alpha-L-arabinofuranosidase involved in the degradation of arabinoxylan, a major component of plant hemicellulose. Able to hydrolyze 1,5-, 1,3- and 1,2-alpha-linkages not only in L-arabinofuranosyl oligosaccharides, but also in polysaccharides containing terminal non-reducing L-arabinofuranoses in side chains, like L-arabinan, arabinogalactan and arabinoxylan. The chain is Alpha-L-arabinofuranosidase B (abfB) from Emericella nidulans (strain FGSC A4 / ATCC 38163 / CBS 112.46 / NRRL 194 / M139) (Aspergillus nidulans).